A 79-amino-acid polypeptide reads, in one-letter code: Conotoxin ArMSGL-0121 (79 aa).

The signal sequence occupies residues 1–20 (MSRLGIMVLTLLLLVFIVTS). A propeptide spanning residues 21 to 44 (HQDAGEKQATQRNAINFRWRRSFT) is cleaved from the precursor. Disulfide bonds link C52–C64, C56–C73, and C63–C77. L78 carries the leucine amide modification.

This sequence belongs to the conotoxin O3 superfamily. In terms of tissue distribution, expressed by the venom duct.

Its subcellular location is the secreted. The chain is Conotoxin ArMSGL-0121 from Conus arenatus (Sand-dusted cone).